A 427-amino-acid polypeptide reads, in one-letter code: 3-phosphoshikimate 1-carboxyvinyltransferase (427 aa).

The 3-phosphoshikimate site is built by Lys22, Ser23, and Arg27. Lys22 is a phosphoenolpyruvate binding site. 2 residues coordinate phosphoenolpyruvate: Gly96 and Arg124. 3-phosphoshikimate is bound by residues Ser169, Ser170, Gln171, Ser197, Asp313, Asn336, and Lys340. Residue Gln171 coordinates phosphoenolpyruvate. Catalysis depends on Asp313, which acts as the Proton acceptor. Residues Arg344, Arg386, and Lys411 each contribute to the phosphoenolpyruvate site.

This sequence belongs to the EPSP synthase family. Monomer.

It localises to the cytoplasm. The catalysed reaction is 3-phosphoshikimate + phosphoenolpyruvate = 5-O-(1-carboxyvinyl)-3-phosphoshikimate + phosphate. It functions in the pathway metabolic intermediate biosynthesis; chorismate biosynthesis; chorismate from D-erythrose 4-phosphate and phosphoenolpyruvate: step 6/7. Its function is as follows. Catalyzes the transfer of the enolpyruvyl moiety of phosphoenolpyruvate (PEP) to the 5-hydroxyl of shikimate-3-phosphate (S3P) to produce enolpyruvyl shikimate-3-phosphate and inorganic phosphate. In Salmonella newport (strain SL254), this protein is 3-phosphoshikimate 1-carboxyvinyltransferase.